The sequence spans 166 residues: UPF0304 protein VFMJ11_1926 (166 aa).

The protein belongs to the UPF0304 family.

The sequence is that of UPF0304 protein VFMJ11_1926 from Aliivibrio fischeri (strain MJ11) (Vibrio fischeri).